The following is a 239-amino-acid chain: uncharacterized protein (239 aa).

The tract at residues 104 to 127 is disordered; sequence LPATSQSSQPKSTNSSTESSSIGQ. Over residues 107–127 the composition is skewed to low complexity; it reads TSQSSQPKSTNSSTESSSIGQ. Positions 134-202 form a coiled coil; the sequence is ENEINLNKNK…HFIQNNQESF (69 aa). A helical transmembrane segment spans residues 211 to 231; that stretch reads VKIGSAFIIYIFYNVLFFIIV.

The protein resides in the membrane. This is an uncharacterized protein from Dictyostelium discoideum (Social amoeba).